A 2091-amino-acid chain; its full sequence is Protein Ycf2 (2091 aa).

The tract at residues 191–210 is disordered; the sequence is DSSQLKGSSDQSRDPLDSIS. Residue 1432-1439 coordinates ATP; the sequence is GSIGTGRS.

The protein belongs to the Ycf2 family.

It localises to the plastid. It is found in the chloroplast stroma. Probable ATPase of unknown function. Its presence in a non-photosynthetic plant (Epifagus virginiana) and experiments in tobacco indicate that it has an essential function which is probably not related to photosynthesis. This is Protein Ycf2 from Daucus carota (Wild carrot).